Here is a 205-residue protein sequence, read N- to C-terminus: Outer-membrane lipoprotein carrier protein (205 aa).

An N-terminal signal peptide occupies residues 1–21; that stretch reads MRFLAVATMVVALMVPWSVRA.

The protein belongs to the LolA family. As to quaternary structure, monomer.

Its subcellular location is the periplasm. Functionally, participates in the translocation of lipoproteins from the inner membrane to the outer membrane. Only forms a complex with a lipoprotein if the residue after the N-terminal Cys is not an aspartate (The Asp acts as a targeting signal to indicate that the lipoprotein should stay in the inner membrane). This Methylobacillus flagellatus (strain ATCC 51484 / DSM 6875 / VKM B-1610 / KT) protein is Outer-membrane lipoprotein carrier protein.